The primary structure comprises 156 residues: Hemerythrin-like protein (156 aa).

Residues His54, His84, Glu88, His109, His113, His142, and Asp147 each contribute to the Fe cation site.

This sequence belongs to the hemerythrin family.

Oxygen-binding protein. The oxygen-binding site contains two iron atoms. The sequence is that of Hemerythrin-like protein from Nematostella vectensis (Starlet sea anemone).